A 263-amino-acid polypeptide reads, in one-letter code: Neurovirulence factor ICP34.5 (263 aa).

Residues 1 to 14 (MARRRRHRGPRRPR) show a composition bias toward basic residues. A required for nucleolar localization region spans residues 1–16 (MARRRRHRGPRRPRPP). 2 disordered regions span residues 1–128 (MARR…PFRL) and 149–190 (RRAG…PATP). The span at 24–35 (TAQSQVTSTPNS) shows a compositional bias: polar residues. The segment covering 45–58 (AAPPPPPASGPPPS) has biased composition (pro residues). Acidic residues predominate over residues 73-83 (ASDDDDDDDWP). 2 stretches are compositionally biased toward pro residues: residues 84–93 (DSPPPEPAPE) and 119–128 (SHPPSRPFRL). The Nuclear export signal motif lies at 128–137 (LPPRLALRLR). 10 repeat units span residues 161 to 163 (ATP), 164 to 166 (ATP), 167 to 169 (ATP), 170 to 172 (ATP), 173 to 175 (ATP), 176 to 178 (ATP), 179 to 181 (ATP), 182 to 184 (ATP), 185 to 187 (ATP), and 188 to 190 (ATP). The segment at 161–190 (ATPATPATPATPATPATPATPATPATPATP) is 10 X 3 AA tandem repeats of A-T-P. Low complexity predominate over residues 164–190 (ATPATPATPATPATPATPATPATPATP). Residues 190–203 (PARVRFSPHVRVRH) form an interaction with host PPP1CA region. The important for interferon resistance stretch occupies residues 205–263 (VVWASAARLARRGSWARERADRARFRRRVAEAEAVIGPCLGPEARARALARGAGPANSV). A Bipartite nuclear localization signal motif is present at residues 215–233 (RRGSWARERADRARFRRRV). Positions 233-248 (VAEAEAVIGPCLGPEA) are interaction with host EIF2S1/EIF-2ALPHA.

This sequence belongs to the PPP1R15 family. Interacts with host PPP1CA; this interaction to forms a high-molecular-weight complex that dephosphorylates EIF2S1/eIF-2alpha. Interacts with host EIF2S1/eIF-2alpha; this interaction is crucial for the specific dephosphorylation of EIF2S1/eIF-2alpha by PPP1CA. Binds to proliferating cell nuclear antigen (PCNA), which may release host cells from growth arrest and facilitate viral replication. Interacts (via N-terminus) with host C1QBP; this interaction allows C1QBP to be recruited to the inner nuclear membrane by ICP34.5. Interacts with host PRKCA. Interacts with protein UL31. Interacts with host STING/TMEM173; this interaction inhibits the intracellular DNA sensing pathway. Interacts with host BECN1; this interaction modulates host autophagy.

It localises to the host cytoplasm. It is found in the host nucleus. Its subcellular location is the host nucleolus. The protein resides in the virion. Inhibits the establishment of the immune response and of the integrated stress response (ISR) in the infected cell. Plays essential roles in viral nuclear egress to mediate capsid transit across the nuclear membrane. Facilitates nuclear egress cooperatively with host C1QBP and protein kinase C/PKC to induce lamin A/C phosphorylation and subsequent reorganization. In turn, lamina disassembles and nuclear egress occurs. Recruits the serine/threonine protein phosphatase PPP1CA/PP1-alpha to dephosphorylate the translation initiation factor EIF2S1/eIF-2alpha, thereby couteracting the host shutoff of protein synthesis involving double-stranded RNA-dependent protein kinase EIF2AK2/PKR. In turn, controls host IRF3 activation and subsequently inhibits host interferon response. Controls the DNA sensing pathway by interacting with and inhibiting host STING/TMEM173. Also down-modulates the host MHC class II proteins cell surface expression. Acts as a neurovirulence factor that has a profound effect on the growth of the virus in central nervous system tissue, by interacting with host BECN1 and thereby antagonizing the host autophagy response. The sequence is that of Neurovirulence factor ICP34.5 (RL1) from Human herpesvirus 1 (strain F) (HHV-1).